A 142-amino-acid polypeptide reads, in one-letter code: UPF0102 protein Bcen2424_0290 (142 aa).

Over residues 1–19 (MCHAAPARPEGARGRPPSG) the composition is skewed to low complexity. Positions 1–27 (MCHAAPARPEGARGRPPSGDNFSGAAR) are disordered.

This sequence belongs to the UPF0102 family.

In Burkholderia cenocepacia (strain HI2424), this protein is UPF0102 protein Bcen2424_0290.